Consider the following 223-residue polypeptide: MAIYKVALLLLFGMILLASDFEHAKACTKECDTRIDFGICPLLETKRVEGLCTNCCAGKKGCKYFSKDGTYICDGESEWVSEKNNNLKKACTKECDTRIDFGICPLLETKRVEGLCTNCCAGKKGCKYFSKDGTYICDGESEWVSEKDNNLEKDCTKECDTRIDFGICPLLETKRVKGLCTNCCAGKKGCKYFSADGTYICDGESEWVSEGENDLQKSNVAIS.

A signal peptide spans 1–24 (MAIYKVALLLLFGMILLASDFEHA). 3 consecutive repeat copies span residues 24 to 81 (AKAC…EWVS), 88 to 145 (KKAC…EWVS), and 152 to 209 (EKDC…EWVS). 8 cysteine pairs are disulfide-bonded: C27–C120, C31–C116, C40–C126, C52–C95, C55–C73, C56–C91, C62–C104, and C119–C137.

This sequence belongs to the protease inhibitor I20 (potato type II proteinase inhibitor) family.

This chain is Proteinase inhibitor type-2 TR8 (ARPI), found in Solanum lycopersicum (Tomato).